Consider the following 213-residue polypeptide: MTTRKSVLREVEEFRLAVELVELGARLQVLESEVAISRDRLTRLYKELRGVSPPKGQLPSSPEWFLTWRPNVHASLFLSAYRFLMAQGKQSRIRCIVSAYRLYVEHISLIGEDLTLSFTRAWTMLRFLDSGTLVSSTCKCCGGSFVRHKYDLQTNFVCGLCAPPPRAAKGKKLATSAEPFVVPEDLQQTISIEPAAMNRPKDAPLRRMGSLKP.

Positions 138, 141, 158, and 161 each coordinate Zn(2+).

It belongs to the FlhC family. Heterohexamer composed of two FlhC and four FlhD subunits. Each FlhC binds a FlhD dimer, forming a heterotrimer, and a hexamer assembles by dimerization of two heterotrimers. Requires Zn(2+) as cofactor.

It is found in the cytoplasm. Its function is as follows. Functions in complex with FlhD as a master transcriptional regulator that regulates transcription of several flagellar and non-flagellar operons by binding to their promoter region. Activates expression of class 2 flagellar genes, including fliA, which is a flagellum-specific sigma factor that turns on the class 3 genes. Also regulates genes whose products function in a variety of physiological pathways. This Cupriavidus metallidurans (strain ATCC 43123 / DSM 2839 / NBRC 102507 / CH34) (Ralstonia metallidurans) protein is Flagellar transcriptional regulator FlhC.